Consider the following 4010-residue polypeptide: Extracellular matrix organizing protein FRAS1 (4010 aa).

Residues 1–25 form the signal peptide; the sequence is MGVLKAWLGVALALAEFAVLPNCEG. VWFC domains follow at residues 26 to 87, 92 to 152, 156 to 216, 218 to 278, and 282 to 342; these read ACLY…PQCA, GSCH…PICV, KPCS…SQCS, RSCS…EECA, and RSCS…PECI. The Extracellular portion of the chain corresponds to 26–3903; it reads ACLYQGSFLA…AASLSQTGAS (3878 aa). A Phosphoserine modification is found at Ser343. Positions 358–416 constitute a VWFC 6 domain; the sequence is SSSAREIKHVPDGEKWEEGPCKLCECREAQVTCYEPSCPPCPVATLALVVKGQCCPDCT. FU repeat units lie at residues 408–459, 461–504, 506–552, 554–598, 601–646, 648–704, 707–752, 754–799, 802–851, 853–899, 902–947, 951–996, 998–1041, and 1045–1088; these read KGQC…GFYQ, GSLC…GFYQ, HHSC…GFYN, QGTC…GYYA, TGSC…GFYP, HGIC…HFYL, TGLC…THFN, EGTC…EQFL, VGYC…GHYK, RGTC…GHYL, NQVC…QYYL, TKTC…QHYR, SGSC…GYFA, and KHRC…GFSG. The N-linked (GlcNAc...) asparagine glycan is linked to Asn727. N-linked (GlcNAc...) asparagine glycosylation is found at Asn1094 and Asn1107. CSPG repeat units follow at residues 1101-1196, 1216-1307, 1328-1440, 1465-1561, 1597-1691, 1712-1812, and 1834-1938; these read TPSL…LKIS, APYV…FQAN, ALRL…FQVS, APKL…FSFA, PAFQ…ISVT, GPRL…FSVS, and PPHI…FYVS. N-linked (GlcNAc...) asparagine glycosylation is present at Asn1506. The N-linked (GlcNAc...) asparagine glycan is linked to Asn1779. 2 N-linked (GlcNAc...) asparagine glycosylation sites follow: Asn1950 and Asn1980. 5 CSPG repeats span residues 1959–2059, 2080–2179, 2201–2293, 2313–2406, and 2441–2538; these read EPPR…FSLT, IPHL…FDVV, PPVV…FVLS, ARPL…FTVS, and TPRI…FLVK. Calx-beta domains follow at residues 2545-2648, 2661-2772, 2786-2892, 2907-3009, and 3027-3131; these read VSDN…VGLS, AKVV…IALA, AKVL…VFLS, IAIN…VYLG, and ATVT…LVLG. Residues Asn2565, Asn2666, and Asn2684 are each glycosylated (N-linked (GlcNAc...) asparagine). 6 N-linked (GlcNAc...) asparagine glycosylation sites follow: Asn2910, Asn2987, Asn3072, Asn3220, Asn3678, and Asn3877. The chain crosses the membrane as a helical span at residues 3904–3924; sequence IGSALAAIMLLLLLFLVACFV. Residues 3925–4010 are Cytoplasmic-facing; the sequence is TRKCQKQKKK…HNNLQDGTEV (86 aa).

This sequence belongs to the FRAS1 family.

The protein localises to the cell membrane. Functionally, involved in extracellular matrix organization. Required for the regulation of epidermal-basement membrane adhesion responsible for proper organogenesis during embryonic development. Involved in brain organization and function. In Mus musculus (Mouse), this protein is Extracellular matrix organizing protein FRAS1.